A 248-amino-acid polypeptide reads, in one-letter code: ATP synthase subunit a, chloroplastic (248 aa).

Transmembrane regions (helical) follow at residues 38–58, 96–116, 135–155, 200–220, and 221–241; these read QVLI…TIVV, VPFI…GALL, INTT…AGIS, LVVV…VMFL, and GLFT…AYIG.

Belongs to the ATPase A chain family. As to quaternary structure, F-type ATPases have 2 components, CF(1) - the catalytic core - and CF(0) - the membrane proton channel. CF(1) has five subunits: alpha(3), beta(3), gamma(1), delta(1), epsilon(1). CF(0) has four main subunits: a, b, b' and c.

Its subcellular location is the plastid. The protein resides in the chloroplast thylakoid membrane. Functionally, key component of the proton channel; it plays a direct role in the translocation of protons across the membrane. The polypeptide is ATP synthase subunit a, chloroplastic (Amborella trichopoda).